A 255-amino-acid chain; its full sequence is Indole-3-glycerol phosphate synthase (255 aa).

It belongs to the TrpC family.

It carries out the reaction 1-(2-carboxyphenylamino)-1-deoxy-D-ribulose 5-phosphate + H(+) = (1S,2R)-1-C-(indol-3-yl)glycerol 3-phosphate + CO2 + H2O. It participates in amino-acid biosynthesis; L-tryptophan biosynthesis; L-tryptophan from chorismate: step 4/5. The polypeptide is Indole-3-glycerol phosphate synthase (Streptococcus thermophilus (strain ATCC BAA-491 / LMD-9)).